The chain runs to 223 residues: Deoxyribose-phosphate aldolase (223 aa).

The active-site Proton donor/acceptor is D92. K158 serves as the catalytic Schiff-base intermediate with acetaldehyde. The Proton donor/acceptor role is filled by K188.

This sequence belongs to the DeoC/FbaB aldolase family. DeoC type 1 subfamily.

The protein localises to the cytoplasm. The catalysed reaction is 2-deoxy-D-ribose 5-phosphate = D-glyceraldehyde 3-phosphate + acetaldehyde. It functions in the pathway carbohydrate degradation; 2-deoxy-D-ribose 1-phosphate degradation; D-glyceraldehyde 3-phosphate and acetaldehyde from 2-deoxy-alpha-D-ribose 1-phosphate: step 2/2. In terms of biological role, catalyzes a reversible aldol reaction between acetaldehyde and D-glyceraldehyde 3-phosphate to generate 2-deoxy-D-ribose 5-phosphate. This is Deoxyribose-phosphate aldolase from Mycobacterium avium (strain 104).